Reading from the N-terminus, the 290-residue chain is Fructokinase (290 aa).

Position 130 (Thr-130) interacts with ATP. Residues His-153, Cys-169, His-172, and Cys-175 each contribute to the Zn(2+) site. Residues Pro-183 and 231-235 (GVMEK) contribute to the ATP site.

This sequence belongs to the ROK (NagC/XylR) family. In terms of assembly, homodimer. It depends on Mg(2+) as a cofactor.

It carries out the reaction D-fructose + ATP = D-fructose 6-phosphate + ADP + H(+). Its activity is regulated as follows. Inactivated by EDTA. Inhibition by zinc ions (Potential). In Lactococcus lactis subsp. cremoris (Streptococcus cremoris), this protein is Fructokinase (scrK).